We begin with the raw amino-acid sequence, 153 residues long: Ribosome maturation factor RimP (153 aa).

The protein belongs to the RimP family.

The protein localises to the cytoplasm. In terms of biological role, required for maturation of 30S ribosomal subunits. This chain is Ribosome maturation factor RimP, found in Clostridium botulinum (strain Kyoto / Type A2).